The chain runs to 195 residues: A-type ATP synthase subunit E (195 aa).

Belongs to the V-ATPase E subunit family. Has multiple subunits with at least A(3), B(3), C, D, E, F, H, I and proteolipid K(x).

It is found in the cell membrane. Its function is as follows. Component of the A-type ATP synthase that produces ATP from ADP in the presence of a proton gradient across the membrane. The sequence is that of A-type ATP synthase subunit E from Halobacterium salinarum (strain ATCC 29341 / DSM 671 / R1).